The chain runs to 347 residues: MEAGMKLGLQLGYWGAQPPQNHAELVAAAEDAGFDTVFTAEAWGSDAYTPLAWWGSSTQRVRLGTSVIQLSARTPTACAMAALTLDHLSGGRHILGLGVSGPQVVEGWYGQRFPKPLARTREYIDIVRQVWARESPVTSAGPHYRLPLTGEGTTGLGKALKPITHPLRADIPIMLGAEGPKNVALAAEICDGWLPIFYSPRMAGMYNEWLDEGFARPGARRSREDFEICATAQVVITDDRAAAFAGIKPFLALYMGGMGAEETNFHADVYRRMGYTQVVDEVTKLFRSGRKDEAAEIIPDELVDDAVIVGDIDHVRKQMAVWEAAGVTMMVVTAGSAEQVRDLAALV.

This chain is Putative coenzyme F420-dependent oxidoreductase Rv3520c, found in Mycobacterium tuberculosis (strain ATCC 25618 / H37Rv).